A 226-amino-acid polypeptide reads, in one-letter code: ATP-dependent dethiobiotin synthetase BioD (226 aa).

12-17 (GVGKTV) serves as a coordination point for ATP. T16 lines the Mg(2+) pocket. The active site involves K37. T41 is a substrate binding site. ATP contacts are provided by residues D49, 108–111 (EGAG), 169–170 (GS), and 197–199 (PAG). Residues D49 and E108 each contribute to the Mg(2+) site.

This sequence belongs to the dethiobiotin synthetase family. In terms of assembly, homodimer. Mg(2+) is required as a cofactor.

The protein resides in the cytoplasm. The catalysed reaction is (7R,8S)-7,8-diammoniononanoate + CO2 + ATP = (4R,5S)-dethiobiotin + ADP + phosphate + 3 H(+). It participates in cofactor biosynthesis; biotin biosynthesis; biotin from 7,8-diaminononanoate: step 1/2. Functionally, catalyzes a mechanistically unusual reaction, the ATP-dependent insertion of CO2 between the N7 and N8 nitrogen atoms of 7,8-diaminopelargonic acid (DAPA, also called 7,8-diammoniononanoate) to form a ureido ring. This is ATP-dependent dethiobiotin synthetase BioD from Mycobacterium bovis (strain ATCC BAA-935 / AF2122/97).